A 555-amino-acid chain; its full sequence is Formate--tetrahydrofolate ligase (555 aa).

Position 65–72 (65–72) interacts with ATP; it reads TPAGEGKS.

The protein belongs to the formate--tetrahydrofolate ligase family.

The catalysed reaction is (6S)-5,6,7,8-tetrahydrofolate + formate + ATP = (6R)-10-formyltetrahydrofolate + ADP + phosphate. Its pathway is one-carbon metabolism; tetrahydrofolate interconversion. In Staphylococcus aureus (strain COL), this protein is Formate--tetrahydrofolate ligase.